We begin with the raw amino-acid sequence, 827 residues long: Glycerol-3-phosphate acyltransferase (827 aa).

An HXXXXD motif motif is present at residues 325–330 (CHRSHM).

Belongs to the GPAT/DAPAT family.

It is found in the cell inner membrane. It carries out the reaction sn-glycerol 3-phosphate + an acyl-CoA = a 1-acyl-sn-glycero-3-phosphate + CoA. It participates in phospholipid metabolism; CDP-diacylglycerol biosynthesis; CDP-diacylglycerol from sn-glycerol 3-phosphate: step 1/3. The polypeptide is Glycerol-3-phosphate acyltransferase (Escherichia coli (strain SMS-3-5 / SECEC)).